The sequence spans 1873 residues: Kinesin-related protein 8 (1873 aa).

The Kinesin motor domain maps to 13–413; it reads CVRVALRVRP…LKYAYRARNI (401 aa). 93–100 contacts ATP; that stretch reads GQTGSGKT. Disordered stretches follow at residues 231–302, 463–567, 778–797, 841–891, 930–1008, 1179–1207, 1244–1267, 1328–1360, and 1403–1467; these read NSPV…DERN, VSIP…SPTS, LDKDKDKDKDNKDKDQYYED, KIDS…ARKT, KQRV…TEQL, PQPLQSQQQQQEKQQKQSNSEQVLEQRSS, LPSQQQLSSSQELAEEYTSPSTSS, TTTTTTTTNKQQVPKSFAPLNNTNNNNNNNNSS, and NNIT…PRPD. The segment covering 232–247 has biased composition (low complexity); the sequence is SPVTSSSTSSTSTSSS. Residues 280-297 are compositionally biased toward acidic residues; it reads IDEDEEDDEEDEDDDIMS. A compositionally biased stretch (low complexity) spans 473–567; it reads TPTLTNNNNN…NNTATPSPTS (95 aa). Residues 715 to 933 are a coiled coil; it reads FENDSEELSD…KEIEVHKQRV (219 aa). Composition is skewed to low complexity over residues 937–1005, 1182–1200, 1244–1254, 1348–1358, and 1423–1454; these read INSK…TPTT, LQSQQQQQEKQQKQSNSEQ, LPSQQQLSSSQ, NNTNNNNNNNN, and SLQSSPLSLSLESGLATALANNGNNNNNSNNN. 5 WD repeats span residues 1506–1546, 1548–1587, 1589–1628, 1636–1673, and 1677–1714; these read GHDG…NMLD, SSPGPVRSLCINGSSGCMFSGGAERTVKVWDIRSPGNTNL, IFKTPSDVNCLVTYGNYVVSGLENGTFKVWDIRHMQKPLK, HHTGTIFSMSVTSKYLVTGSRDHTINLFHRDSFVLAQK, and PHHDGVTSIAVLDDVIYSGSRDRTIKRWDVSSINNLIN. The segment at 1758-1780 is disordered; sequence NNNNNNSSNNNKSSSAPSSTTSS. WD repeat units lie at residues 1805–1842 and 1844–1873; these read AHNDWVNCLCIHNGMIFSGGKDSNIKGWDPLLSSNSLL and GHESSISCLTSSKEFLFSGSTDKCIKIWKC.

This sequence belongs to the TRAFAC class myosin-kinesin ATPase superfamily. Kinesin family.

It localises to the cytoplasm. The protein localises to the cytoskeleton. Microtubule-associated force-producing protein that plays a role in organelle transport. Its motor activity is directed toward the microtubule's plus end. Cooperates with kif10 and dynein to organize interphase microtubules. The sequence is that of Kinesin-related protein 8 (kif8) from Dictyostelium discoideum (Social amoeba).